We begin with the raw amino-acid sequence, 319 residues long: Telomere-binding protein cav (319 aa).

Positions 107-312 are required for binding to Su(var)205; sequence RRKMVQPYPE…SISFQNSGSE (206 aa). Disordered stretches follow at residues 141–163 and 186–248; these read WQKQ…DNEV and PSDL…PDYY. 2 short sequence motifs (su(var)205-binding Pro-containing repeat) span residues 220–224 and 273–279; these read PETQM and PETEMNE. Positions 291 to 311 are enriched in polar residues; sequence SMSIGPSINSDGSISFQNSGS. Positions 291–319 are disordered; that stretch reads SMSIGPSINSDGSISFQNSGSEPIDVDVN.

In terms of assembly, interacts (via C-terminus) with Su(var)205 dimer (via hinge and chromoshadow domain) and with moi to form the terminin, telomere-capping, complex. Interacts with HP6, which is also part of the terminin complex.

Its subcellular location is the nucleus. The protein resides in the chromosome. The protein localises to the telomere. In terms of biological role, binds to chromosome ends in a sequence-dependent manner and is required for telomere capping. In Drosophila yakuba (Fruit fly), this protein is Telomere-binding protein cav.